The chain runs to 215 residues: Large ribosomal subunit protein uL16 (215 aa).

The segment at 1–22 (MGRRPARCYRQPKGKPYPKSRY) is disordered.

The protein belongs to the universal ribosomal protein uL16 family.

The sequence is that of Large ribosomal subunit protein uL16 (RPL10) from Tetrahymena thermophila (strain SB210).